A 421-amino-acid chain; its full sequence is Synaptotagmin-12 (421 aa).

Topologically, residues 1–18 (MAVDVTEYHLSVIKSPPG) are vesicular. Residues 19–39 (WEVGVYAAGALALLGIAAVSL) form a helical membrane-spanning segment. Topologically, residues 40–421 (WKLWTSGSFP…VSMWHPVRRN (382 aa)) are cytoplasmic. Ser-97 is subject to Phosphoserine; by PKA. Ser-99 and Ser-214 each carry phosphoserine. C2 domains are found at residues 152-272 (TLGQ…SGWL) and 283-416 (AVGE…SMWH).

This sequence belongs to the synaptotagmin family. As to quaternary structure, homodimer. Can also form heterodimers. Interacts with SYT1. Post-translationally, phosphorylation of Ser-97 is required for mossy-fiber long-term potentiation. Expressed in the brain, specifically in neurons of the cerebellum, cortex, hippocampus, olfactory bulb, brainstem and spinal cord (at protein level).

The protein localises to the cytoplasmic vesicle. It is found in the secretory vesicle. It localises to the synaptic vesicle membrane. Synaptic vesicle phosphoprotein that enhances spontaneous neurotransmitter release but does not effect induced neurotransmitter release. Unlike other synaptotagmins, it does not bind Ca(2+) or phospholipids. Essential for mossy-fiber long-term potentiation in the hippocampus. This chain is Synaptotagmin-12, found in Rattus norvegicus (Rat).